The sequence spans 153 residues: Endoribonuclease YbeY (153 aa).

Zn(2+)-binding residues include His114, His118, and His124.

This sequence belongs to the endoribonuclease YbeY family. Zn(2+) serves as cofactor.

It localises to the cytoplasm. In terms of biological role, single strand-specific metallo-endoribonuclease involved in late-stage 70S ribosome quality control and in maturation of the 3' terminus of the 16S rRNA. This is Endoribonuclease YbeY from Shewanella baltica (strain OS223).